Here is a 351-residue protein sequence, read N- to C-terminus: Phosphoribosylformylglycinamidine cyclo-ligase (351 aa).

Belongs to the AIR synthase family.

The protein localises to the cytoplasm. It carries out the reaction 2-formamido-N(1)-(5-O-phospho-beta-D-ribosyl)acetamidine + ATP = 5-amino-1-(5-phospho-beta-D-ribosyl)imidazole + ADP + phosphate + H(+). The protein operates within purine metabolism; IMP biosynthesis via de novo pathway; 5-amino-1-(5-phospho-D-ribosyl)imidazole from N(2)-formyl-N(1)-(5-phospho-D-ribosyl)glycinamide: step 2/2. The polypeptide is Phosphoribosylformylglycinamidine cyclo-ligase (Burkholderia cenocepacia (strain HI2424)).